Here is a 650-residue protein sequence, read N- to C-terminus: DNA gyrase subunit B (650 aa).

A compositionally biased stretch (basic and acidic residues) spans 400–414; that stretch reads RRSQEARELTRRKSP. Residues 400–422 are disordered; it reads RRSQEARELTRRKSPFDSGSLPG. The region spanning 435 to 549 is the Toprim domain; that stretch reads SELYIVEGDS…QGNIFIAQPP (115 aa). Positions 441, 514, and 516 each coordinate Mg(2+).

It belongs to the type II topoisomerase GyrB family. In terms of assembly, heterotetramer, composed of two GyrA and two GyrB chains. In the heterotetramer, GyrA contains the active site tyrosine that forms a transient covalent intermediate with DNA, while GyrB binds cofactors and catalyzes ATP hydrolysis. Mg(2+) is required as a cofactor. Mn(2+) serves as cofactor. Requires Ca(2+) as cofactor.

Its subcellular location is the cytoplasm. It carries out the reaction ATP-dependent breakage, passage and rejoining of double-stranded DNA.. Its function is as follows. A type II topoisomerase that negatively supercoils closed circular double-stranded (ds) DNA in an ATP-dependent manner to modulate DNA topology and maintain chromosomes in an underwound state. Negative supercoiling favors strand separation, and DNA replication, transcription, recombination and repair, all of which involve strand separation. Also able to catalyze the interconversion of other topological isomers of dsDNA rings, including catenanes and knotted rings. Type II topoisomerases break and join 2 DNA strands simultaneously in an ATP-dependent manner. This Mycoplasma genitalium (strain ATCC 33530 / DSM 19775 / NCTC 10195 / G37) (Mycoplasmoides genitalium) protein is DNA gyrase subunit B.